The primary structure comprises 456 residues: Rap guanine nucleotide exchange factor-like 1 (456 aa).

The Ras-GEF domain maps to 218-454 (EPEDVANHLT…FELSYKLEAN (237 aa)).

In terms of biological role, probable guanine nucleotide exchange factor (GEF). This is Rap guanine nucleotide exchange factor-like 1 (RAPGEFL1) from Pongo pygmaeus (Bornean orangutan).